Here is a 175-residue protein sequence, read N- to C-terminus: Pycsar effector protein RsPycTM (175 aa).

Helical transmembrane passes span 17-37 (AKNAALLTFCSVWMGAIITLL), 44-64 (PLGFDYAFKASLTVLFIAAII), and 146-166 (AGSLVLFAFGIMMVPPILFCI).

Its subcellular location is the cell inner membrane. Functionally, pycsar (pyrimidine cyclase system for antiphage resistance) provides immunity against bacteriophage. The pyrimidine cyclase (PycC) synthesizes cyclic nucleotides in response to infection; these serve as specific second messenger signals. The signals activate the nearby effector, leading to bacterial cell death and abortive phage infection. A clade A Pycsar system. The effector gene of a two-gene Pycsar system. Expression of this and uridylate cyclase RsPycC (AC A0A4R2TZQ0) probably confers resistance to bacteriophage. The genes are probably only expressed in response to bacteriophage infection. Probably only responds to cUMP (produced by its cognate NTP cyclase), acts by impairing membrane integrity. The chain is Pycsar effector protein RsPycTM from Rhizobium sp. (strain PP-F2F-G36).